Reading from the N-terminus, the 1009-residue chain is Type VII secretion system accessory factor EsaA (1009 aa).

The helical transmembrane segment at 7-27 (IYALIVTLIIIIAIVSMIFFV) threads the bilayer. Basic and acidic residues predominate over residues 680 to 697 (TFAEEPQEPKIDKGKNDE). The disordered stretch occupies residues 680–707 (TFAEEPQEPKIDKGKNDEFNTMSSNLDK). The next 5 membrane-spanning stretches (helical) occupy residues 822-842 (ISPT…AYIF), 869-889 (VITS…VGLI), 903-923 (KFIL…TYLL), 928-948 (SIGM…MNNL), and 979-999 (IGLV…LNMF).

This sequence belongs to the EsaA family. Homodimer. Interacts with EssB.

The protein localises to the cell membrane. Functionally, component of the type VII secretion system (Ess). Provides together with EssB and other components such as EssC and EssE a secretion plateform accross the cytoplasmic membrane in the host. This is Type VII secretion system accessory factor EsaA from Staphylococcus aureus (strain USA300).